Reading from the N-terminus, the 595-residue chain is Elongation factor 4 (595 aa).

The tr-type G domain occupies 2–183; the sequence is KNIRNFCIIA…TIVEKVPAPK (182 aa). Residues 14–19 and 130–133 each bind GTP; these read DHGKST and NKID.

The protein belongs to the TRAFAC class translation factor GTPase superfamily. Classic translation factor GTPase family. LepA subfamily.

The protein localises to the cell inner membrane. It carries out the reaction GTP + H2O = GDP + phosphate + H(+). Functionally, required for accurate and efficient protein synthesis under certain stress conditions. May act as a fidelity factor of the translation reaction, by catalyzing a one-codon backward translocation of tRNAs on improperly translocated ribosomes. Back-translocation proceeds from a post-translocation (POST) complex to a pre-translocation (PRE) complex, thus giving elongation factor G a second chance to translocate the tRNAs correctly. Binds to ribosomes in a GTP-dependent manner. In Parabacteroides distasonis (strain ATCC 8503 / DSM 20701 / CIP 104284 / JCM 5825 / NCTC 11152), this protein is Elongation factor 4.